Here is a 562-residue protein sequence, read N- to C-terminus: Ikaros family zinc finger protein (562 aa).

3 C2H2-type zinc fingers span residues 45 to 67 (IKCE…IRSH), 73 to 95 (FKCH…YKIH), and 101 to 123 (FQCP…MRIH). Residues 129 to 152 (YRCSYCARSYKSRQSMKEHEYQCP) form a C2H2-type 4; degenerate zinc finger. 4 disordered regions span residues 178–210 (NPLA…PPYP), 293–342 (QNQQ…VKPT), 361–404 (QLED…KEDD), and 451–473 (DESK…STQD). Positions 307–326 (PSLSEATPSSHSSHSSAEDS) are enriched in low complexity. The segment covering 327 to 336 (GQVNKFSPTE) has biased composition (polar residues). The span at 369 to 383 (DSRKRPHSFESEPTP) shows a compositional bias: basic and acidic residues. Residues 456–471 (EISSVDSRSPLDQSST) show a composition bias toward polar residues. 2 consecutive C2H2-type zinc fingers follow at residues 494–516 (WECK…MGVH) and 522–546 (LVCN…HHQH).

This sequence belongs to the Ikaros C2H2-type zinc-finger protein family. In terms of tissue distribution, expression is strongest in the anterior Fol cells of the oikoplastic epithelium.

The protein resides in the nucleus. This Oikopleura dioica (Tunicate) protein is Ikaros family zinc finger protein.